The following is a 432-amino-acid chain: Cyclin-A2 (432 aa).

The residue at position 1 (Met-1) is an N-acetylmethionine. A Phosphoserine modification is found at Ser-5. 2 disordered regions span residues 26 to 45 (LQEDQENINPEKAAPVQQPR) and 55 to 75 (SGNPRGLAQQQRPKTRRVAPL). The residue at position 55 (Ser-55) is a Phosphoserine.

The protein belongs to the cyclin family. Cyclin AB subfamily. Interacts with the CDK1 and CDK2 protein kinases to form serine/threonine kinase holoenzyme complexes. Interacts with CDK1 (hyperphosphorylated form in G1 and underphosphorylated forms in S and G2). Interacts with CDK2; the interaction increases from G1 to G2. Interacts (associated with CDK2 but not with CDK1) with SCAPER; regulates the activity of CCNA2/CDK2 by transiently maintaining CCNA2 in the cytoplasm. Forms a ternary complex with CDK2 and CDKN1B; CDKN1B inhibits the kinase activity of CDK2 through conformational rearrangements. Interacts with INCA1. As to quaternary structure, (Microbial infection) Interacts with human cytomegalovirus protein UL32. In terms of processing, polyubiquitinated via 'Lys-11'-linked ubiquitin by the anaphase-promoting complex (APC/C), leading to its degradation by the proteasome. Deubiquitinated and stabilized by USP37 enables entry into S phase. Ubiquitinated during the G1 phase by the SCF(FBXO31) complex, leading to its proteasomal degradation.

Its subcellular location is the nucleus. It is found in the cytoplasm. Functionally, cyclin which controls both the G1/S and the G2/M transition phases of the cell cycle. Functions through the formation of specific serine/threonine protein kinase holoenzyme complexes with the cyclin-dependent protein kinases CDK1 or CDK2. The cyclin subunit confers the substrate specificity of these complexes and differentially interacts with and activates CDK1 and CDK2 throughout the cell cycle. This chain is Cyclin-A2, found in Homo sapiens (Human).